The chain runs to 667 residues: Homeobox protein 3 (667 aa).

4 disordered regions span residues 44 to 108, 179 to 232, 249 to 268, and 331 to 418; these read FFQP…NSSI, NNNN…TVYN, NNNN…VNNN, and STNK…YQKQ. Residues 52-63 are compositionally biased toward pro residues; it reads LPPPTNQQPQPQ. Residues 75-96 are compositionally biased toward polar residues; the sequence is CNSSFENSPQQPTSPLLISSQT. Positions 97-108 are enriched in low complexity; sequence SYPSDLSSNSSI. The segment covering 334–343 has biased composition (basic residues); the sequence is KRMKISHHSH. The segment covering 344-379 has biased composition (low complexity); that stretch reads SLSNNNENSLSQPYFNNNNNNNNENENVYNIVNEQN. A compositionally biased stretch (polar residues) spans 380-390; the sequence is PTFNPNQSNTH. Positions 386–454 form a coiled coil; it reads QSNTHQQQEE…ENENVICSEF (69 aa). Positions 602–664 form a DNA-binding region, homeobox; the sequence is EFKSRRILSE…NKRMRDKSNK (63 aa).

It is found in the nucleus. Its function is as follows. Putative transcription factor. The polypeptide is Homeobox protein 3 (hbx3) (Dictyostelium discoideum (Social amoeba)).